We begin with the raw amino-acid sequence, 167 residues long: Small ribosomal subunit protein uS5 (167 aa).

The region spanning Leu-12–Val-75 is the S5 DRBM domain.

The protein belongs to the universal ribosomal protein uS5 family. In terms of assembly, part of the 30S ribosomal subunit. Contacts proteins S4 and S8.

With S4 and S12 plays an important role in translational accuracy. In terms of biological role, located at the back of the 30S subunit body where it stabilizes the conformation of the head with respect to the body. This Alcanivorax borkumensis (strain ATCC 700651 / DSM 11573 / NCIMB 13689 / SK2) protein is Small ribosomal subunit protein uS5.